Consider the following 190-residue polypeptide: Outer-membrane lipoprotein LolB (190 aa).

An N-terminal signal peptide occupies residues 1 to 16; it reads MRLRFSLLLTVSLLAG. A lipid anchor (N-palmitoyl cysteine) is attached at cysteine 17. A lipid anchor (S-diacylglycerol cysteine) is attached at cysteine 17.

This sequence belongs to the LolB family. In terms of assembly, monomer.

Its subcellular location is the cell outer membrane. In terms of biological role, plays a critical role in the incorporation of lipoproteins in the outer membrane after they are released by the LolA protein. The chain is Outer-membrane lipoprotein LolB from Dechloromonas aromatica (strain RCB).